The chain runs to 199 residues: Chaperone protein TorD (199 aa).

Belongs to the TorD/DmsD family. TorD subfamily.

It localises to the cytoplasm. Involved in the biogenesis of TorA. Acts on TorA before the insertion of the molybdenum cofactor and, as a result, probably favors a conformation of the apoenzyme that is competent for acquiring the cofactor. This Escherichia coli O7:K1 (strain IAI39 / ExPEC) protein is Chaperone protein TorD.